The primary structure comprises 312 residues: Isethionate sulfite-lyase activating enzyme (312 aa).

A Radical SAM core domain is found at 20–304 (HDGPGIRTIV…GLQKTALDIL (285 aa)). [4Fe-4S] cluster-binding residues include Cys34, Cys38, Cys41, Cys60, Cys66, Cys69, Cys73, Cys93, Cys96, Cys100, and Cys104. Residue 40 to 42 (WCS) coordinates S-adenosyl-L-methionine. 4Fe-4S ferredoxin-type domains follow at residues 51 to 83 (AELA…CGDD) and 84 to 115 (DKPR…YGKK). S-adenosyl-L-methionine-binding positions include Gly144, 193 to 195 (DIK), and His267.

It belongs to the organic radical-activating enzymes family. Monomer. [4Fe-4S] cluster serves as cofactor.

The enzyme catalyses glycyl-[protein] + reduced [flavodoxin] + S-adenosyl-L-methionine = glycin-2-yl radical-[protein] + semiquinone [flavodoxin] + 5'-deoxyadenosine + L-methionine + H(+). Its pathway is organosulfur degradation; alkanesulfonate degradation. Involved in an anaerobic respiration pathway that converts the sulfonate isethionate (2-hydroxyethanesulfonate) to ammonia, acetate and sulfide. Catalyzes activation of the isethionate sulfite-lyase IslA under anaerobic conditions by generation of an organic free radical on a glycine residue, via a homolytic cleavage of S-adenosyl-L-methionine (SAM). The chain is Isethionate sulfite-lyase activating enzyme from Desulfovibrio desulfuricans (strain ATCC 27774 / DSM 6949 / MB).